Consider the following 241-residue polypeptide: Phycocyanobilin:ferredoxin oxidoreductase (241 aa).

Belongs to the HY2 family.

It carries out the reaction (2R,3Z)-phycocyanobilin + 4 oxidized [2Fe-2S]-[ferredoxin] = biliverdin IXalpha + 4 reduced [2Fe-2S]-[ferredoxin] + 4 H(+). Functionally, catalyzes the four-electron reduction of biliverdin IX-alpha (2-electron reduction at both the A and D rings); the reaction proceeds via an isolatable 2-electron intermediate, 181,182-dihydrobiliverdin. This chain is Phycocyanobilin:ferredoxin oxidoreductase, found in Prochlorococcus marinus (strain MIT 9301).